Consider the following 247-residue polypeptide: Putative 2-succinyl-6-hydroxy-2,4-cyclohexadiene-1-carboxylate synthase (247 aa).

Residues 4 to 229 (IIFLHGLLGT…CAGHNSHLEN (226 aa)) form the AB hydrolase-1 domain.

It belongs to the AB hydrolase superfamily. MenH family. Monomer.

The enzyme catalyses 5-enolpyruvoyl-6-hydroxy-2-succinyl-cyclohex-3-ene-1-carboxylate = (1R,6R)-6-hydroxy-2-succinyl-cyclohexa-2,4-diene-1-carboxylate + pyruvate. It functions in the pathway quinol/quinone metabolism; 1,4-dihydroxy-2-naphthoate biosynthesis; 1,4-dihydroxy-2-naphthoate from chorismate: step 3/7. It participates in quinol/quinone metabolism; menaquinone biosynthesis. Its function is as follows. Catalyzes a proton abstraction reaction that results in 2,5-elimination of pyruvate from 2-succinyl-5-enolpyruvyl-6-hydroxy-3-cyclohexene-1-carboxylate (SEPHCHC) and the formation of 2-succinyl-6-hydroxy-2,4-cyclohexadiene-1-carboxylate (SHCHC). This chain is Putative 2-succinyl-6-hydroxy-2,4-cyclohexadiene-1-carboxylate synthase, found in Haemophilus influenzae (strain ATCC 51907 / DSM 11121 / KW20 / Rd).